A 349-amino-acid polypeptide reads, in one-letter code: Hydroxymethylglutaryl-CoA synthase (349 aa).

The (3S)-3-hydroxy-3-methylglutaryl-CoA site is built by Asp-30 and Ala-31. Residue Glu-82 is the Proton donor/acceptor of the active site. (3S)-3-hydroxy-3-methylglutaryl-CoA is bound by residues Cys-114 and Thr-155. Cys-114 (acyl-thioester intermediate) is an active-site residue. Arg-203 contributes to the CoA binding site. Thr-205 and His-238 together coordinate (3S)-3-hydroxy-3-methylglutaryl-CoA. Catalysis depends on His-238, which acts as the Proton donor/acceptor. Lys-243 is a CoA binding site. (3S)-3-hydroxy-3-methylglutaryl-CoA contacts are provided by Asn-270 and Ser-300.

It belongs to the thiolase-like superfamily. Archaeal HMG-CoA synthase family. As to quaternary structure, interacts with acetoacetyl-CoA thiolase that catalyzes the precedent step in the pathway and with a DUF35 protein. The acetoacetyl-CoA thiolase/HMG-CoA synthase complex channels the intermediate via a fused CoA-binding site, which allows for efficient coupling of the endergonic thiolase reaction with the exergonic HMGCS reaction.

The enzyme catalyses acetoacetyl-CoA + acetyl-CoA + H2O = (3S)-3-hydroxy-3-methylglutaryl-CoA + CoA + H(+). Its pathway is metabolic intermediate biosynthesis; (R)-mevalonate biosynthesis; (R)-mevalonate from acetyl-CoA: step 2/3. In terms of biological role, catalyzes the condensation of acetyl-CoA with acetoacetyl-CoA to form 3-hydroxy-3-methylglutaryl-CoA (HMG-CoA). Functions in the mevalonate (MVA) pathway leading to isopentenyl diphosphate (IPP), a key precursor for the biosynthesis of isoprenoid compounds that are building blocks of archaeal membrane lipids. In Methanococcus vannielii (strain ATCC 35089 / DSM 1224 / JCM 13029 / OCM 148 / SB), this protein is Hydroxymethylglutaryl-CoA synthase.